The following is a 107-amino-acid chain: Replication initiation control protein YabA (107 aa).

Zn(2+) is bound by residues H81, C83, C97, and C100.

This sequence belongs to the YabA family. As to quaternary structure, homotetramer. Interacts with both DnaA and DnaN, acting as a bridge between these two proteins. The cofactor is Zn(2+).

It localises to the cytoplasm. It is found in the nucleoid. Involved in control of chromosome replication initiation. Inhibits the cooperative binding of DnaA to the oriC region, thus negatively regulating initiation of chromosome replication. Inhibits the ability of DnaA-ATP to form a helix on DNA; does not disassemble preformed DnaA-DNA helices. Decreases the residence time of DnaA on the chromosome at its binding sites (oriC, replication forks and promoter-binding sites). Tethers DnaA to the replication machinery via the DNA polymerase beta sliding clamp subunit (dnaN). Associates with oriC and other DnaA targets on the chromosome in a DnaA-dependent manner. This Streptococcus equi subsp. equi (strain 4047) protein is Replication initiation control protein YabA.